Reading from the N-terminus, the 151-residue chain is Putative membrane protein ORF10 (151 aa).

A run of 2 helical transmembrane segments spans residues L7–V23 and G107–Y123.

The protein localises to the membrane. In Ictalurid herpesvirus 1 (strain Auburn) (IcHV-1), this protein is Putative membrane protein ORF10 (ORF10).